The chain runs to 174 residues: MLTISKLIPQGQGLAPVLLRRASTMELDWDVRQKSRFEATDSAGRQLGVFLPRGTVVRGGDVLVAEDGSLVKVDAAPQPVLRITPCSSHGTAFDLTRAAYHLGNRHVPIELKPDHLKIEPDHVLADMLRAMHLTVLAVNEPFEPENGAYATGGHAHDHDGEPEHVHGPGCQHAH.

The disordered stretch occupies residues 146-174; that stretch reads NGAYATGGHAHDHDGEPEHVHGPGCQHAH. The segment covering 154–166 has biased composition (basic and acidic residues); the sequence is HAHDHDGEPEHVH.

This sequence belongs to the UreE family.

The protein localises to the cytoplasm. Its function is as follows. Involved in urease metallocenter assembly. Binds nickel. Probably functions as a nickel donor during metallocenter assembly. The sequence is that of Urease accessory protein UreE from Albidiferax ferrireducens (strain ATCC BAA-621 / DSM 15236 / T118) (Rhodoferax ferrireducens).